A 396-amino-acid chain; its full sequence is Putative glutamate--cysteine ligase 2-2 (396 aa).

The protein belongs to the glutamate--cysteine ligase type 2 family. YbdK subfamily.

The catalysed reaction is L-cysteine + L-glutamate + ATP = gamma-L-glutamyl-L-cysteine + ADP + phosphate + H(+). Its function is as follows. ATP-dependent carboxylate-amine ligase which exhibits weak glutamate--cysteine ligase activity. This chain is Putative glutamate--cysteine ligase 2-2, found in Mycolicibacterium smegmatis (strain ATCC 700084 / mc(2)155) (Mycobacterium smegmatis).